Consider the following 146-residue polypeptide: Cell division protein SepF (146 aa).

The protein belongs to the SepF family. In terms of assembly, homodimer. Interacts with FtsZ.

It localises to the cytoplasm. Cell division protein that is part of the divisome complex and is recruited early to the Z-ring. Probably stimulates Z-ring formation, perhaps through the cross-linking of FtsZ protofilaments. Its function overlaps with FtsA. In Alkaliphilus oremlandii (strain OhILAs) (Clostridium oremlandii (strain OhILAs)), this protein is Cell division protein SepF.